Reading from the N-terminus, the 203-residue chain is Orotate phosphoribosyltransferase (203 aa).

5-phospho-alpha-D-ribose 1-diphosphate contacts are provided by residues arginine 94, lysine 95, lysine 98, histidine 100, and aspartate 119–serine 127. Orotate contacts are provided by threonine 123 and arginine 151.

The protein belongs to the purine/pyrimidine phosphoribosyltransferase family. PyrE subfamily. As to quaternary structure, homodimer. Requires Mg(2+) as cofactor.

It carries out the reaction orotidine 5'-phosphate + diphosphate = orotate + 5-phospho-alpha-D-ribose 1-diphosphate. It functions in the pathway pyrimidine metabolism; UMP biosynthesis via de novo pathway; UMP from orotate: step 1/2. Its function is as follows. Catalyzes the transfer of a ribosyl phosphate group from 5-phosphoribose 1-diphosphate to orotate, leading to the formation of orotidine monophosphate (OMP). The chain is Orotate phosphoribosyltransferase from Staphylothermus marinus (strain ATCC 43588 / DSM 3639 / JCM 9404 / F1).